Here is a 462-residue protein sequence, read N- to C-terminus: Retinoic acid receptor RXR-alpha (462 aa).

The interval 1 to 107 is disordered; that stretch reads MDTKHFLPLD…MNPVSSSEDI (107 aa). Residues 1-134 are modulating; it reads MDTKHFLPLD…GNMASFTKHI (134 aa). A Glycyl lysine isopeptide (Lys-Gly) (interchain with G-Cter in SUMO2) cross-link involves residue lysine 4. Residues 11-24 are compositionally biased toward polar residues; sequence FSTQVNSSLTSPTG. Phosphoserine occurs at positions 21 and 27. The segment covering 49 to 58 has biased composition (polar residues); the sequence is SPISTLSSPI. 2 positions are modified to phosphoserine; by MAPK8 and MAPK9: serine 56 and serine 70. Over residues 78–104 the composition is skewed to polar residues; it reads SVPTTPTLGFSTGSPQLSSPMNPVSSS. Position 82 is a phosphothreonine; by MAPK8 and MAPK9 (threonine 82). Lysine 108 participates in a covalent cross-link: Glycyl lysine isopeptide (Lys-Gly) (interchain with G-Cter in SUMO). Serine 129 bears the Phosphoserine mark. Zn(2+)-binding residues include cysteine 135 and cysteine 138. The segment at 135-155 adopts an NR C4-type zinc-finger fold; that stretch reads CAICGDRSSGKHYGVYSCEGC. The nuclear receptor DNA-binding region spans 135-200; the sequence is CAICGDRSSG…RYQKCLAMGM (66 aa). Lysine 145 carries the N6-acetyllysine; by EP300 modification. 2 residues coordinate Zn(2+): cysteine 152 and cysteine 155. Positions 160–165 are nuclear localization signal; it reads KRTVRK. Cysteine 171, cysteine 177, cysteine 187, and cysteine 190 together coordinate Zn(2+). The NR C4-type zinc-finger motif lies at 171-195; sequence CRDNKDCLIDKRQRNRCQYCRYQKC. Residues 201-224 are hinge; sequence KREAVQEERQRGKDRNENEVESTS. Residues 206–218 are compositionally biased toward basic and acidic residues; the sequence is QEERQRGKDRNEN. Residues 206–228 form a disordered region; that stretch reads QEERQRGKDRNENEVESTSSANE. An NR LBD domain is found at 227 to 458; that stretch reads NEDMPVERIL…TFLMEMLEAP (232 aa). At serine 259 the chain carries Phosphoserine. Serine 260 is modified (phosphoserine; by MAPK8 and MAPK9). Positions 316 and 327 each coordinate 9-cis-retinoate. All-trans-retinoate contacts are provided by arginine 316 and alanine 327. The tract at residues 348-368 is required for nuclear export; that stretch reads RVLTELVSKMRDMQMDKTELG.

The protein belongs to the nuclear hormone receptor family. NR2 subfamily. As to quaternary structure, homodimer. Heterodimer (via C-terminus) with RARA; required for ligand-dependent retinoic acid receptor transcriptional activity; association with RARA is enhanced by pulsatile shear stress. Heterodimer with PPARA (via the leucine-like zipper in the LBD); the interaction is required for PPARA transcriptional activity. Heterodimerizes with PPARG. Heterodimerizes (via NR LBD) with RARB. Heterodimerizes with NR1H4; the heterodimerization enhances the binding affinity for LXXLL motifs from coactivators. Interacts with NCOA3 and NCOA6 coactivators. Interacts with coactivator FAM120B. Interacts with coactivator PELP1, SENP6, SFPQ, DNTTIP2 and RNF8. Interacts with PRMT2. Interacts with ASXL1. Interacts with BHLHE40/DEC1, BHLHE41/DEC2, NCOR1 and NCOR2. Interacts in a ligand-dependent fashion with MED1 and NCOA1. Interacts with VDR. Interacts with EP300; the interaction is decreased by 9-cis retinoic acid. Heterodimer (via C-terminus) with NR4A1 (via DNA-binding domain); DNA-binding of the heterodimer is enhanced by 9-cis retinoic acid. NR4A1 competes with EP300 for interaction with RXRA and thereby attenuates EP300 mediated acetylation of RXRA. In the absence of hormonal ligand, interacts with TACC1. Interacts ith IGFBP3. In terms of assembly, (Microbial infection) Interacts (via the DNA binding domain) with HCV core protein; the interaction enhances the transcriptional activities of the RXRA/RARA and the RXRA/PPARA heterodimers. In terms of processing, acetylated by EP300; acetylation enhances DNA binding and transcriptional activity. Phosphorylated on serine and threonine residues mainly in the N-terminal modulating domain. Constitutively phosphorylated on Ser-21 in the presence or absence of ligand. Under stress conditions, hyperphosphorylated by activated JNK on Ser-56, Ser-70, Thr-82 and Ser-260. Phosphorylated on Ser-27, in vitro, by PKA. This phosphorylation is required for repression of cAMP-mediated transcriptional activity of RARA. Post-translationally, ubiquitinated by UBR5, leading to its degradation: UBR5 specifically recognizes and binds ligand-bound RXRA when it is not associated with coactivators (NCOAs). In presence of NCOAs, the UBR5-degron is not accessible, preventing its ubiquitination and degradation. In terms of processing, sumoylation negatively regulates transcriptional activity. Desumoylated specifically by SENP6. As to expression, expressed in lung fibroblasts (at protein level). Expressed in monocytes. Highly expressed in liver, also found in kidney and brain.

The protein localises to the nucleus. It localises to the cytoplasm. Its subcellular location is the mitochondrion. In terms of biological role, receptor for retinoic acid that acts as a transcription factor. Forms homo- or heterodimers with retinoic acid receptors (RARs) and binds to target response elements in response to their ligands, all-trans or 9-cis retinoic acid, to regulate gene expression in various biological processes. The RAR/RXR heterodimers bind to the retinoic acid response elements (RARE) composed of tandem 5'-AGGTCA-3' sites known as DR1-DR5 to regulate transcription. The high affinity ligand for retinoid X receptors (RXRs) is 9-cis retinoic acid. In the absence of ligand, the RXR-RAR heterodimers associate with a multiprotein complex containing transcription corepressors that induce histone deacetylation, chromatin condensation and transcriptional suppression. On ligand binding, the corepressors dissociate from the receptors and coactivators are recruited leading to transcriptional activation. Serves as a common heterodimeric partner for a number of nuclear receptors, such as RARA, RARB and PPARA. The RXRA/RARB heterodimer can act as a transcriptional repressor or transcriptional activator, depending on the RARE DNA element context. The RXRA/PPARA heterodimer is required for PPARA transcriptional activity on fatty acid oxidation genes such as ACOX1 and the P450 system genes. Together with RARA, positively regulates microRNA-10a expression, thereby inhibiting the GATA6/VCAM1 signaling response to pulsatile shear stress in vascular endothelial cells. Acts as an enhancer of RARA binding to RARE DNA element. May facilitate the nuclear import of heterodimerization partners such as VDR and NR4A1. Promotes myelin debris phagocytosis and remyelination by macrophages. Plays a role in the attenuation of the innate immune system in response to viral infections, possibly by negatively regulating the transcription of antiviral genes such as type I IFN genes. Involved in the regulation of calcium signaling by repressing ITPR2 gene expression, thereby controlling cellular senescence. This is Retinoic acid receptor RXR-alpha (RXRA) from Homo sapiens (Human).